A 357-amino-acid chain; its full sequence is DNA replication and repair protein RecF (357 aa).

Residue 31 to 38 (GQNGAGKT) coordinates ATP.

This sequence belongs to the RecF family.

Its subcellular location is the cytoplasm. Functionally, the RecF protein is involved in DNA metabolism; it is required for DNA replication and normal SOS inducibility. RecF binds preferentially to single-stranded, linear DNA. It also seems to bind ATP. This chain is DNA replication and repair protein RecF, found in Coxiella burnetii (strain CbuG_Q212) (Coxiella burnetii (strain Q212)).